The primary structure comprises 216 residues: Triosephosphate isomerase (216 aa).

A substrate-binding site is contributed by 7–9; sequence NLK. Residue H89 is the Electrophile of the active site. E137 acts as the Proton acceptor in catalysis. Substrate-binding positions include I142, G175, and 196–197; that span reads AS.

The protein belongs to the triosephosphate isomerase family. In terms of assembly, homotetramer; dimer of dimers.

It is found in the cytoplasm. The enzyme catalyses D-glyceraldehyde 3-phosphate = dihydroxyacetone phosphate. Its pathway is carbohydrate biosynthesis; gluconeogenesis. It participates in carbohydrate degradation; glycolysis; D-glyceraldehyde 3-phosphate from glycerone phosphate: step 1/1. Its function is as follows. Involved in the gluconeogenesis. Catalyzes stereospecifically the conversion of dihydroxyacetone phosphate (DHAP) to D-glyceraldehyde-3-phosphate (G3P). The chain is Triosephosphate isomerase from Thermoplasma acidophilum (strain ATCC 25905 / DSM 1728 / JCM 9062 / NBRC 15155 / AMRC-C165).